The primary structure comprises 194 residues: Crossover junction endodeoxyribonuclease RuvC (194 aa).

Active-site residues include Asp7, Glu68, and Asp141. Residues Asp7, Glu68, and Asp141 each coordinate Mg(2+).

Belongs to the RuvC family. As to quaternary structure, homodimer which binds Holliday junction (HJ) DNA. The HJ becomes 2-fold symmetrical on binding to RuvC with unstacked arms; it has a different conformation from HJ DNA in complex with RuvA. In the full resolvosome a probable DNA-RuvA(4)-RuvB(12)-RuvC(2) complex forms which resolves the HJ. Requires Mg(2+) as cofactor.

It localises to the cytoplasm. The enzyme catalyses Endonucleolytic cleavage at a junction such as a reciprocal single-stranded crossover between two homologous DNA duplexes (Holliday junction).. In terms of biological role, the RuvA-RuvB-RuvC complex processes Holliday junction (HJ) DNA during genetic recombination and DNA repair. Endonuclease that resolves HJ intermediates. Cleaves cruciform DNA by making single-stranded nicks across the HJ at symmetrical positions within the homologous arms, yielding a 5'-phosphate and a 3'-hydroxyl group; requires a central core of homology in the junction. The consensus cleavage sequence is 5'-(A/T)TT(C/G)-3'. Cleavage occurs on the 3'-side of the TT dinucleotide at the point of strand exchange. HJ branch migration catalyzed by RuvA-RuvB allows RuvC to scan DNA until it finds its consensus sequence, where it cleaves and resolves the cruciform DNA. The sequence is that of Crossover junction endodeoxyribonuclease RuvC from Mycolicibacterium vanbaalenii (strain DSM 7251 / JCM 13017 / BCRC 16820 / KCTC 9966 / NRRL B-24157 / PYR-1) (Mycobacterium vanbaalenii).